A 343-amino-acid chain; its full sequence is Dimethyladenosine transferase 1, mitochondrial (343 aa).

Residues 28–31, Asn29, Leu31, Gly56, Glu78, Asp133, and Asn169 contribute to the S-adenosyl-L-methionine site; that span reads QNFL.

The protein belongs to the class I-like SAM-binding methyltransferase superfamily. rRNA adenine N(6)-methyltransferase family. KsgA subfamily.

Its subcellular location is the mitochondrion. Probable S-adenosyl-L-methionine-dependent methyltransferase which specifically dimethylates mitochondrial 12S rRNA at the conserved stem loop. Also required for basal transcription of mitochondrial DNA. Stimulates transcription independently of the methyltransferase activity. The protein is Dimethyladenosine transferase 1, mitochondrial of Vermamoeba vermiformis (Amoeba).